Consider the following 246-residue polypeptide: tRNA pseudouridine synthase A (246 aa).

The Nucleophile role is filled by Asp-52. Tyr-111 is a substrate binding site.

Belongs to the tRNA pseudouridine synthase TruA family. In terms of assembly, homodimer.

The enzyme catalyses uridine(38/39/40) in tRNA = pseudouridine(38/39/40) in tRNA. Functionally, formation of pseudouridine at positions 38, 39 and 40 in the anticodon stem and loop of transfer RNAs. The polypeptide is tRNA pseudouridine synthase A (Ehrlichia ruminantium (strain Gardel)).